Consider the following 1320-residue polypeptide: CAP-Gly domain-containing linker protein 1 (1320 aa).

The segment at 1–53 is disordered; sequence MSMLKPSGLKAPTKILKPGSTALKTPAAAAAPLEKTVPSEKASGPPSSETQEE. Positions 21–35 are enriched in low complexity; the sequence is TALKTPAAAAAPLEK. A Phosphoserine modification is found at Ser48. Thr50 carries the post-translational modification Phosphothreonine. The 43-residue stretch at 78–120 folds into the CAP-Gly 1 domain; the sequence is GETQFAPGQWAGIVLDEPIGKNDGSVAGVRYFQCEPLKGIFTR. The interval 97-101 is important for tubulin binding; that stretch reads GKNDG. Ser146 carries the phosphoserine modification. The segment covering 156–171 has biased composition (polar residues); the sequence is VSSSPATPSNIPQKPS. The segment at 156-181 is disordered; that stretch reads VSSSPATPSNIPQKPSQPVAKETSAT. Thr181 bears the Phosphothreonine mark. Phosphoserine is present on residues Ser194, Ser196, Ser199, and Ser203. Residues 231-273 form the CAP-Gly 2 domain; it reads GETDFAKGEWCGVELDEPLGKNDGAVAGTRYFQCQPKYGLFAP. Residues 301 to 331 are compositionally biased toward low complexity; it reads TTPASLKRSPSASSLSSMSSVASSVSSKPSR. Residues 301 to 338 form a disordered region; it reads TTPASLKRSPSASSLSSMSSVASSVSSKPSRTGLLTET. Ser309 is modified (phosphoserine). A Phosphoserine; by PKA modification is found at Ser311. Phosphoserine is present on residues Ser314 and Ser347. The interval 1089–1109 is disordered; that stretch reads SLPSNTLRESEYRKDADEEKA. A compositionally biased stretch (basic and acidic residues) spans 1096–1109; it reads RESEYRKDADEEKA. A Phosphoserine modification is found at Ser1116. The tract at residues 1178 to 1201 is disordered; sequence KRQLSSSSGNTDVQTEEDERAQES. Polar residues predominate over residues 1180–1190; that stretch reads QLSSSSGNTDV. Ser1246 carries the post-translational modification Phosphoserine. Residues 1299-1316 form a CCHC-type zinc finger; sequence PYCEICEMFGHWATNCND.

Interacts with MTOR; phosphorylates and regulates CLIP1. Interacts (via CAP-Gly domains) with tubulin and TUBA1B. Interacts with SLAIN2. Interacts with MAPRE1 and MAPRE3. Interacts (via zinc finger) with DCTN1. Binds preferentially to tyrosinated microtubules, and only marginally to detyrosinated microtubules. In terms of processing, phosphorylated. Phosphorylation induces conformational changes by increasing the affinity of the N-terminus for C-terminus, resulting in inhibition of its function thus decreasing its binding to microtubules and DCTN1. Exhibits a folded, autoinhibited conformation when phosphorylated and an open conformation when dephosphorylated with increased binding affinity to microtubules and DCTN1. Phosphorylation regulates its recruitment to tyrosinated microtubules and the recruitment of vesicular cargo to microtubules in neurons. Phosphorylation by MTOR may positively regulate CLIP1 association with microtubules.

It is found in the cytoplasm. Its subcellular location is the cytoskeleton. The protein localises to the cytoplasmic vesicle membrane. It localises to the cell projection. The protein resides in the ruffle. Its function is as follows. Binds to the plus end of microtubules and regulates the dynamics of the microtubule cytoskeleton. Promotes microtubule growth and microtubule bundling. Links cytoplasmic vesicles to microtubules and thereby plays an important role in intracellular vesicle trafficking. Plays a role macropinocytosis and endosome trafficking. The chain is CAP-Gly domain-containing linker protein 1 (Clip1) from Rattus norvegicus (Rat).